The chain runs to 412 residues: Serine hydroxymethyltransferase (412 aa).

(6S)-5,6,7,8-tetrahydrofolate is bound by residues Leu-120 and 124 to 126 (GHL). Lys-228 bears the N6-(pyridoxal phosphate)lysine mark. 353–355 (SPF) provides a ligand contact to (6S)-5,6,7,8-tetrahydrofolate.

It belongs to the SHMT family. In terms of assembly, homodimer. The cofactor is pyridoxal 5'-phosphate.

Its subcellular location is the cytoplasm. The catalysed reaction is (6R)-5,10-methylene-5,6,7,8-tetrahydrofolate + glycine + H2O = (6S)-5,6,7,8-tetrahydrofolate + L-serine. Its pathway is one-carbon metabolism; tetrahydrofolate interconversion. It participates in amino-acid biosynthesis; glycine biosynthesis; glycine from L-serine: step 1/1. Catalyzes the reversible interconversion of serine and glycine with tetrahydrofolate (THF) serving as the one-carbon carrier. This reaction serves as the major source of one-carbon groups required for the biosynthesis of purines, thymidylate, methionine, and other important biomolecules. Also exhibits THF-independent aldolase activity toward beta-hydroxyamino acids, producing glycine and aldehydes, via a retro-aldol mechanism. This Lachnoclostridium phytofermentans (strain ATCC 700394 / DSM 18823 / ISDg) (Clostridium phytofermentans) protein is Serine hydroxymethyltransferase.